The chain runs to 185 residues: Translocon-associated protein subunit gamma (185 aa).

Methionine 1 is modified (N-acetylmethionine). Topologically, residues methionine 1–lysine 27 are lumenal. At serine 11 the chain carries Phosphoserine. Residues serine 28 to tryptophan 48 traverse the membrane as a helical segment. Over arginine 49–aspartate 54 the chain is Cytoplasmic. Residues leucine 55–alanine 76 traverse the membrane as a helical segment. Residues tyrosine 77–threonine 135 lie on the Lumenal side of the membrane. At serine 105 the chain carries Phosphoserine. Residues phenylalanine 136–leucine 157 form a helical membrane-spanning segment. The Cytoplasmic portion of the chain corresponds to lysine 158–threonine 163. Residues valine 164–serine 184 traverse the membrane as a helical segment.

Belongs to the TRAP-gamma family. In terms of assembly, heterotetramer of TRAP-alpha, TRAP-beta, TRAP-delta and TRAP-gamma.

Its subcellular location is the endoplasmic reticulum membrane. TRAP proteins are part of a complex whose function is to bind calcium to the ER membrane and thereby regulate the retention of ER resident proteins. This is Translocon-associated protein subunit gamma (SSR3) from Bos taurus (Bovine).